A 181-amino-acid chain; its full sequence is MTDKRNNLIWIDLEMTGLSPENDRIIEIATIVTDAELNVLAEGPVLAVHQSDALLDGMDEWNTTHHNNSGLVARVKASTVNDAAAESQTIAFLEQYVEAGMSPMCGNSICQDRRFLANYMPKLEAFFHYRNLDVSTLKELARRWKPDILPGFSKENKHLALDDIRESIAELVYYREHFIDA.

Positions 8-171 (LIWIDLEMTG…DDIRESIAEL (164 aa)) constitute an Exonuclease domain. The active site involves Tyr-129.

The protein belongs to the oligoribonuclease family.

It is found in the cytoplasm. Its function is as follows. 3'-to-5' exoribonuclease specific for small oligoribonucleotides. In Alcanivorax borkumensis (strain ATCC 700651 / DSM 11573 / NCIMB 13689 / SK2), this protein is Oligoribonuclease.